Reading from the N-terminus, the 400-residue chain is Nicotinate phosphoribosyltransferase (400 aa).

Phosphohistidine; by autocatalysis is present on His-220.

Belongs to the NAPRTase family. In terms of processing, transiently phosphorylated on a His residue during the reaction cycle. Phosphorylation strongly increases the affinity for substrates and increases the rate of nicotinate D-ribonucleotide production. Dephosphorylation regenerates the low-affinity form of the enzyme, leading to product release.

The catalysed reaction is nicotinate + 5-phospho-alpha-D-ribose 1-diphosphate + ATP + H2O = nicotinate beta-D-ribonucleotide + ADP + phosphate + diphosphate. The protein operates within cofactor biosynthesis; NAD(+) biosynthesis; nicotinate D-ribonucleotide from nicotinate: step 1/1. Functionally, catalyzes the synthesis of beta-nicotinate D-ribonucleotide from nicotinate and 5-phospho-D-ribose 1-phosphate at the expense of ATP. This is Nicotinate phosphoribosyltransferase from Salmonella agona (strain SL483).